The sequence spans 508 residues: Photosystem II CP47 reaction center protein (508 aa).

Transmembrane regions (helical) follow at residues 21-36, 101-115, 140-156, 203-218, 237-252, and 457-472; these read SVHIMHTALVAGWAGS, IVLSGLCFLAAIWHW, GIHLFLSGVACFGFGAF, IAAGTLGILAGLFHLS, VLSSSIAAVFFAAFVV, and SFALLFFFGHIWHGAR.

Belongs to the PsbB/PsbC family. PsbB subfamily. PSII is composed of 1 copy each of membrane proteins PsbA, PsbB, PsbC, PsbD, PsbE, PsbF, PsbH, PsbI, PsbJ, PsbK, PsbL, PsbM, PsbT, PsbX, PsbY, PsbZ, Psb30/Ycf12, at least 3 peripheral proteins of the oxygen-evolving complex and a large number of cofactors. It forms dimeric complexes. Requires Binds multiple chlorophylls. PSII binds additional chlorophylls, carotenoids and specific lipids. as cofactor.

It localises to the plastid. The protein localises to the chloroplast thylakoid membrane. In terms of biological role, one of the components of the core complex of photosystem II (PSII). It binds chlorophyll and helps catalyze the primary light-induced photochemical processes of PSII. PSII is a light-driven water:plastoquinone oxidoreductase, using light energy to abstract electrons from H(2)O, generating O(2) and a proton gradient subsequently used for ATP formation. In Pelargonium hortorum (Common geranium), this protein is Photosystem II CP47 reaction center protein.